A 691-amino-acid polypeptide reads, in one-letter code: Elongation factor G 2 (691 aa).

One can recognise a tr-type G domain in the interval D8–L287. Residues A17–T24, D85–H89, and N139–D142 contribute to the GTP site.

The protein belongs to the TRAFAC class translation factor GTPase superfamily. Classic translation factor GTPase family. EF-G/EF-2 subfamily.

Its subcellular location is the cytoplasm. In terms of biological role, catalyzes the GTP-dependent ribosomal translocation step during translation elongation. During this step, the ribosome changes from the pre-translocational (PRE) to the post-translocational (POST) state as the newly formed A-site-bound peptidyl-tRNA and P-site-bound deacylated tRNA move to the P and E sites, respectively. Catalyzes the coordinated movement of the two tRNA molecules, the mRNA and conformational changes in the ribosome. This chain is Elongation factor G 2, found in Myxococcus xanthus (strain DK1622).